A 179-amino-acid chain; its full sequence is Large ribosomal subunit protein uL5 (179 aa).

It belongs to the universal ribosomal protein uL5 family. In terms of assembly, part of the 50S ribosomal subunit; part of the 5S rRNA/L5/L18/L25 subcomplex. Contacts the 5S rRNA and the P site tRNA. Forms a bridge to the 30S subunit in the 70S ribosome.

In terms of biological role, this is one of the proteins that bind and probably mediate the attachment of the 5S RNA into the large ribosomal subunit, where it forms part of the central protuberance. In the 70S ribosome it contacts protein S13 of the 30S subunit (bridge B1b), connecting the 2 subunits; this bridge is implicated in subunit movement. Contacts the P site tRNA; the 5S rRNA and some of its associated proteins might help stabilize positioning of ribosome-bound tRNAs. In Staphylococcus aureus (strain MW2), this protein is Large ribosomal subunit protein uL5.